The sequence spans 183 residues: Hypoxanthine-guanine phosphoribosyltransferase (183 aa).

Diphosphate-binding residues include arginine 47 and glycine 48. Residues glutamate 103 and aspartate 104 each coordinate Mg(2+). The active-site Proton acceptor is aspartate 107. GMP contacts are provided by residues lysine 134, 155–156, and aspartate 162; that span reads FV. Arginine 168 is a diphosphate binding site.

The protein belongs to the purine/pyrimidine phosphoribosyltransferase family. The cofactor is Mg(2+).

The protein resides in the cytoplasm. The enzyme catalyses IMP + diphosphate = hypoxanthine + 5-phospho-alpha-D-ribose 1-diphosphate. It carries out the reaction GMP + diphosphate = guanine + 5-phospho-alpha-D-ribose 1-diphosphate. Its pathway is purine metabolism; IMP biosynthesis via salvage pathway; IMP from hypoxanthine: step 1/1. The protein operates within purine metabolism; GMP biosynthesis via salvage pathway; GMP from guanine: step 1/1. Functionally, purine salvage pathway enzyme that catalyzes the transfer of the ribosyl-5-phosphate group from 5-phospho-alpha-D-ribose 1-diphosphate (PRPP) to the N9 position of the 6-oxopurines hypoxanthine and guanine to form the corresponding ribonucleotides IMP (inosine 5'-monophosphate) and GMP (guanosine 5'-monophosphate), with the release of PPi. The protein is Hypoxanthine-guanine phosphoribosyltransferase (hpt) of Lactococcus lactis subsp. lactis (strain IL1403) (Streptococcus lactis).